Consider the following 141-residue polypeptide: Nucleoside triphosphatase NudI (141 aa).

The region spanning 1 to 141 (MRQRTIVCPL…RKTLRLKGLL (141 aa)) is the Nudix hydrolase domain. The short motif at 38 to 59 (GGVEPGERIEEALRREIREELG) is the Nudix box element.

Belongs to the Nudix hydrolase family. NudI subfamily. Monomer. The cofactor is Mg(2+).

The enzyme catalyses a ribonucleoside 5'-triphosphate + H2O = a ribonucleoside 5'-phosphate + diphosphate + H(+). It carries out the reaction a 2'-deoxyribonucleoside 5'-triphosphate + H2O = a 2'-deoxyribonucleoside 5'-phosphate + diphosphate + H(+). It catalyses the reaction dUTP + H2O = dUMP + diphosphate + H(+). The catalysed reaction is dTTP + H2O = dTMP + diphosphate + H(+). The enzyme catalyses dCTP + H2O = dCMP + diphosphate + H(+). Catalyzes the hydrolysis of nucleoside triphosphates, with a preference for pyrimidine deoxynucleoside triphosphates (dUTP, dTTP and dCTP). The sequence is that of Nucleoside triphosphatase NudI from Escherichia coli O6:K15:H31 (strain 536 / UPEC).